The primary structure comprises 508 residues: Bifunctional purine biosynthesis protein PurH (508 aa).

Residues 1 to 145 (MIKRALLSTY…KNYKDVIVVV (145 aa)) enclose the MGS-like domain.

This sequence belongs to the PurH family.

The enzyme catalyses (6R)-10-formyltetrahydrofolate + 5-amino-1-(5-phospho-beta-D-ribosyl)imidazole-4-carboxamide = 5-formamido-1-(5-phospho-D-ribosyl)imidazole-4-carboxamide + (6S)-5,6,7,8-tetrahydrofolate. It carries out the reaction IMP + H2O = 5-formamido-1-(5-phospho-D-ribosyl)imidazole-4-carboxamide. Its pathway is purine metabolism; IMP biosynthesis via de novo pathway; 5-formamido-1-(5-phospho-D-ribosyl)imidazole-4-carboxamide from 5-amino-1-(5-phospho-D-ribosyl)imidazole-4-carboxamide (10-formyl THF route): step 1/1. It participates in purine metabolism; IMP biosynthesis via de novo pathway; IMP from 5-formamido-1-(5-phospho-D-ribosyl)imidazole-4-carboxamide: step 1/1. The sequence is that of Bifunctional purine biosynthesis protein PurH from Petrotoga mobilis (strain DSM 10674 / SJ95).